A 228-amino-acid chain; its full sequence is Indole-3-glycerol phosphate synthase (228 aa).

It belongs to the TrpC family.

It catalyses the reaction 1-(2-carboxyphenylamino)-1-deoxy-D-ribulose 5-phosphate + H(+) = (1S,2R)-1-C-(indol-3-yl)glycerol 3-phosphate + CO2 + H2O. It participates in amino-acid biosynthesis; L-tryptophan biosynthesis; L-tryptophan from chorismate: step 4/5. This is Indole-3-glycerol phosphate synthase from Pyrococcus furiosus (strain ATCC 43587 / DSM 3638 / JCM 8422 / Vc1).